Reading from the N-terminus, the 499-residue chain is Aspartyl/glutamyl-tRNA(Asn/Gln) amidotransferase subunit B (499 aa).

This sequence belongs to the GatB/GatE family. GatB subfamily. Heterotrimer of A, B and C subunits.

It catalyses the reaction L-glutamyl-tRNA(Gln) + L-glutamine + ATP + H2O = L-glutaminyl-tRNA(Gln) + L-glutamate + ADP + phosphate + H(+). The enzyme catalyses L-aspartyl-tRNA(Asn) + L-glutamine + ATP + H2O = L-asparaginyl-tRNA(Asn) + L-glutamate + ADP + phosphate + 2 H(+). Its function is as follows. Allows the formation of correctly charged Asn-tRNA(Asn) or Gln-tRNA(Gln) through the transamidation of misacylated Asp-tRNA(Asn) or Glu-tRNA(Gln) in organisms which lack either or both of asparaginyl-tRNA or glutaminyl-tRNA synthetases. The reaction takes place in the presence of glutamine and ATP through an activated phospho-Asp-tRNA(Asn) or phospho-Glu-tRNA(Gln). The chain is Aspartyl/glutamyl-tRNA(Asn/Gln) amidotransferase subunit B from Leifsonia xyli subsp. xyli (strain CTCB07).